Consider the following 355-residue polypeptide: Peptide chain release factor 1 (355 aa).

Gln-231 bears the N5-methylglutamine mark.

Belongs to the prokaryotic/mitochondrial release factor family. Methylated by PrmC. Methylation increases the termination efficiency of RF1.

The protein localises to the cytoplasm. Functionally, peptide chain release factor 1 directs the termination of translation in response to the peptide chain termination codons UAG and UAA. This is Peptide chain release factor 1 from Sulfurovum sp. (strain NBC37-1).